We begin with the raw amino-acid sequence, 160 residues long: Phosphopantetheine adenylyltransferase (160 aa).

Serine 9 contacts substrate. Residues 9 to 10 and histidine 17 contribute to the ATP site; that span reads SF. Residues lysine 41, leucine 73, and arginine 87 each contribute to the substrate site. Residues 88–90, glutamate 98, and 123–129 contribute to the ATP site; these read GLR and YTFLSSS.

It belongs to the bacterial CoaD family. As to quaternary structure, homohexamer. Mg(2+) is required as a cofactor.

The protein resides in the cytoplasm. It catalyses the reaction (R)-4'-phosphopantetheine + ATP + H(+) = 3'-dephospho-CoA + diphosphate. It participates in cofactor biosynthesis; coenzyme A biosynthesis; CoA from (R)-pantothenate: step 4/5. Functionally, reversibly transfers an adenylyl group from ATP to 4'-phosphopantetheine, yielding dephospho-CoA (dPCoA) and pyrophosphate. The polypeptide is Phosphopantetheine adenylyltransferase (Dictyoglomus turgidum (strain DSM 6724 / Z-1310)).